A 191-amino-acid polypeptide reads, in one-letter code: Dephospho-CoA kinase (191 aa).

The DPCK domain maps to 3–191 (AIGITGSYAS…KLILVIARKL (189 aa)). 11-16 (ASGKTF) contacts ATP.

It belongs to the CoaE family.

The protein resides in the cytoplasm. The enzyme catalyses 3'-dephospho-CoA + ATP = ADP + CoA + H(+). Its pathway is cofactor biosynthesis; coenzyme A biosynthesis; CoA from (R)-pantothenate: step 5/5. Catalyzes the phosphorylation of the 3'-hydroxyl group of dephosphocoenzyme A to form coenzyme A. The sequence is that of Dephospho-CoA kinase from Rickettsia felis (strain ATCC VR-1525 / URRWXCal2) (Rickettsia azadi).